The chain runs to 395 residues: Ribosomal RNA large subunit methyltransferase I (395 aa).

The PUA domain maps to 2-79 (SSRVTLHPGR…QNESVDNGFF (78 aa)).

The protein belongs to the methyltransferase superfamily. RlmI family.

The protein localises to the cytoplasm. It catalyses the reaction cytidine(1962) in 23S rRNA + S-adenosyl-L-methionine = 5-methylcytidine(1962) in 23S rRNA + S-adenosyl-L-homocysteine + H(+). Specifically methylates the cytosine at position 1962 (m5C1962) of 23S rRNA. This chain is Ribosomal RNA large subunit methyltransferase I, found in Pseudoalteromonas atlantica (strain T6c / ATCC BAA-1087).